A 330-amino-acid polypeptide reads, in one-letter code: tRNA U34 carboxymethyltransferase (330 aa).

Carboxy-S-adenosyl-L-methionine contacts are provided by residues K98, W112, K117, G137, M187–E188, M203, Y207, and R322. Residues N309–P330 form a disordered region.

This sequence belongs to the class I-like SAM-binding methyltransferase superfamily. CmoB family. As to quaternary structure, homotetramer.

The catalysed reaction is carboxy-S-adenosyl-L-methionine + 5-hydroxyuridine(34) in tRNA = 5-carboxymethoxyuridine(34) in tRNA + S-adenosyl-L-homocysteine + H(+). Catalyzes carboxymethyl transfer from carboxy-S-adenosyl-L-methionine (Cx-SAM) to 5-hydroxyuridine (ho5U) to form 5-carboxymethoxyuridine (cmo5U) at position 34 in tRNAs. This is tRNA U34 carboxymethyltransferase from Marinobacter nauticus (strain ATCC 700491 / DSM 11845 / VT8) (Marinobacter aquaeolei).